A 357-amino-acid chain; its full sequence is Probable cinnamyl alcohol dehydrogenase 1 (357 aa).

Residue cysteine 47 coordinates Zn(2+). Threonine 49 provides a ligand contact to NADP(+). Zn(2+) contacts are provided by histidine 69, glutamate 70, cysteine 100, cysteine 103, cysteine 106, cysteine 114, and cysteine 163. NADP(+) is bound by residues threonine 167, 188-193 (GLGGVG), 211-216 (SSSNKK), threonine 251, glycine 275, and 298-300 (SFI).

Belongs to the zinc-containing alcohol dehydrogenase family. In terms of assembly, homodimer. Zn(2+) serves as cofactor. In terms of processing, the N-terminus is blocked.

The enzyme catalyses (E)-cinnamyl alcohol + NADP(+) = (E)-cinnamaldehyde + NADPH + H(+). The catalysed reaction is (E)-coniferol + NADP(+) = (E)-coniferaldehyde + NADPH + H(+). It catalyses the reaction (E)-sinapyl alcohol + NADP(+) = (E)-sinapaldehyde + NADPH + H(+). It carries out the reaction (E)-4-coumaroyl alcohol + NADP(+) = (E)-4-coumaraldehyde + NADPH + H(+). The enzyme catalyses (E)-caffeyl alcohol + NADP(+) = (E)-caffeyl aldehyde + NADPH + H(+). It participates in aromatic compound metabolism; phenylpropanoid biosynthesis. Its function is as follows. Involved in lignin biosynthesis. Catalyzes the final step specific for the production of lignin monomers. Catalyzes the NADPH-dependent reduction of coniferaldehyde, 5-hydroxyconiferaldehyde, sinapaldehyde, 4-coumaraldehyde and caffeyl aldehyde to their respective alcohols. This Nicotiana tabacum (Common tobacco) protein is Probable cinnamyl alcohol dehydrogenase 1.